Reading from the N-terminus, the 215-residue chain is Cytochrome b6 (215 aa).

A helical transmembrane segment spans residues 32–52 (IFYCLGGITLTCFLVQVATGF). Residue C35 coordinates heme c. Heme b-binding residues include H86 and H100. A run of 3 helical transmembrane segments spans residues 90 to 110 (ASMMVLMMILHVFRVYLTGGF), 116 to 136 (LTWVTGVVLAVLTASFGVTGY), and 186 to 206 (LHTFVLPLLTAVFMLMHFLMI). Heme b is bound by residues H187 and H202.

This sequence belongs to the cytochrome b family. PetB subfamily. As to quaternary structure, the 4 large subunits of the cytochrome b6-f complex are cytochrome b6, subunit IV (17 kDa polypeptide, PetD), cytochrome f and the Rieske protein, while the 4 small subunits are PetG, PetL, PetM and PetN. The complex functions as a dimer. Requires heme b as cofactor. The cofactor is heme c.

The protein resides in the plastid. Its subcellular location is the chloroplast thylakoid membrane. Functionally, component of the cytochrome b6-f complex, which mediates electron transfer between photosystem II (PSII) and photosystem I (PSI), cyclic electron flow around PSI, and state transitions. The sequence is that of Cytochrome b6 from Hordeum vulgare (Barley).